Consider the following 364-residue polypeptide: G-protein coupled receptor 4 (364 aa).

Topologically, residues Met-1–Ser-8 are extracellular. The N-linked (GlcNAc...) asparagine glycan is linked to Asn-3. The helical transmembrane segment at Cys-9 to Gln-45 threads the bilayer. 2 disulfides stabilise this stretch: Cys-9–Cys-258 and Cys-90–Cys-168. The Cytoplasmic segment spans residues Val-46–Lys-49. A helical transmembrane segment spans residues Asn-50–Gln-80. Topologically, residues Asp-81–His-85 are extracellular. The helical transmembrane segment at Gly-86 to His-121 threads the bilayer. The Cytoplasmic segment spans residues Pro-122–Arg-129. The helical transmembrane segment at Arg-130–Asn-156 threads the bilayer. Residues Glu-157–Tyr-172 lie on the Extracellular side of the membrane. The extracellular loop 2 (ECL2) stretch occupies residues Glu-157–Tyr-172. An N-linked (GlcNAc...) asparagine glycan is attached at Asn-164. A helical membrane pass occupies residues Pro-173 to Thr-210. Residues Asn-211–Thr-214 lie on the Cytoplasmic side of the membrane. The chain crosses the membrane as a helical span at residues Glu-215–Val-250. The Extracellular segment spans residues Tyr-251–Phe-260. Residues Glu-261–Ala-289 form a helical membrane-spanning segment. At Asn-290–Cys-364 the chain is on the cytoplasmic side.

Belongs to the G-protein coupled receptor 1 family.

It localises to the cell membrane. Activated by a network of residues that connects an extracellular-facing cavity to Glu-145, a conserved charged residue buried in the transmembrane core of the receptor. Protonation likely drives conformational changes in extracellular loop 2 (ECL2), which stabilizes movement of transmembrane 3 (TM3) and a series of rearrangements that connect the extracellular-facing cavity to Glu-145, a residue only conserved in proton-sensing G-protein coupled receptors. Functionally, proton-sensing G-protein coupled receptor activated by extracellular pH, which is required to monitor pH changes and generate adaptive reactions. Ligand binding causes a conformation change that triggers signaling via guanine nucleotide-binding proteins (G proteins) and modulates the activity of downstream effectors, such as adenylate cyclase. This chain is G-protein coupled receptor 4, found in Callorhinchus milii (Ghost shark).